Here is a 1088-residue protein sequence, read N- to C-terminus: Platelet-derived growth factor receptor alpha (1088 aa).

An N-terminal signal peptide occupies residues 1 to 23; sequence MGTSQAFLVLSCLLTGPSLIVCQ. 5 consecutive Ig-like C2-type domains span residues 24–112, 116–200, 201–305, 318–409, and 413–516; these read LLLP…SEIE, IYIY…FKTS, EFNV…KTVT, PTFG…FELS, and PASI…LKLV. Residues 24-527 lie on the Extracellular side of the membrane; sequence LLLPSILPNE…PSLRSELTVA (504 aa). Residues Cys-48 and Cys-99 are joined by a disulfide bond. N-linked (GlcNAc...) asparagine glycans are attached at residues Asn-75, Asn-102, and Asn-178. 2 cysteine pairs are disulfide-bonded: Cys-149–Cys-188 and Cys-234–Cys-289. Residues Asn-352, Asn-358, Asn-457, and Asn-467 are each glycosylated (N-linked (GlcNAc...) asparagine). Cys-434 and Cys-500 are oxidised to a cystine. A helical membrane pass occupies residues 528–548; that stretch reads AAVLVLLVIVIVSLIVLVVIW. The Cytoplasmic segment spans residues 549-1088; that stretch reads KQKPRYEIRW…SSDLVEDSFL (540 aa). Tyr-571 and Tyr-573 each carry phosphotyrosine; by autocatalysis. In terms of domain architecture, Protein kinase spans 592-953; it reads LVLGRILGSG…HLSEIVENLL (362 aa). Residues 598-606 and Lys-626 each bind ATP; that span reads LGSGAFGKV. 6 positions are modified to phosphotyrosine; by autocatalysis: Tyr-719, Tyr-730, Tyr-741, Tyr-753, Tyr-761, and Tyr-767. The active-site Proton acceptor is the Asp-817. Tyr-848, Tyr-987, and Tyr-1017 each carry phosphotyrosine; by autocatalysis. The interval 1017–1088 is disordered; it reads YIIPLPDIDP…SSDLVEDSFL (72 aa). A compositionally biased stretch (polar residues) spans 1040 to 1058; sequence SSQTSEESAIETGSSSSTF. The segment covering 1064-1088 has biased composition (acidic residues); it reads ETIEDIDMMDDIGIDSSDLVEDSFL.

This sequence belongs to the protein kinase superfamily. Tyr protein kinase family. CSF-1/PDGF receptor subfamily. Interacts with homodimeric PDGFA, PDGFB and PDGFC, and with heterodimers formed by PDGFA and PDGFB. Monomer in the absence of bound ligand. Interaction with dimeric PDGFA, PDGFB and/or PDGFC leads to receptor dimerization, where both PDGFRA homodimers and heterodimers with PDGFRB are observed. Interacts (tyrosine phosphorylated) with SHB (via SH2 domain). Interacts (tyrosine phosphorylated) with SHF (via SH2 domain). Interacts (tyrosine phosphorylated) with SRC (via SH2 domain). Interacts (tyrosine phosphorylated) with PIK3R1. Interacts (tyrosine phosphorylated) with PLCG1 (via SH2 domain). Interacts (tyrosine phosphorylated) with CRK, GRB2 and GRB7. Interacts with CD248; this interaction promotes PDGF receptor signaling pathway. In terms of processing, ubiquitinated, leading to its internalization and degradation. Post-translationally, autophosphorylated on tyrosine residues upon ligand binding. Autophosphorylation occurs in trans, i.e. one subunit of the dimeric receptor phosphorylates tyrosine residues on the other subunit. Phosphorylation at Tyr-730 and Tyr-741 is important for interaction with PIK3R1. Phosphorylation at Tyr-719 and Tyr-753 is important for interaction with PTPN11. Phosphorylation at Tyr-761 is important for interaction with CRK. Phosphorylation at Tyr-571 and Tyr-573 is important for interaction with SRC and SRC family members. Phosphorylation at Tyr-987 and Tyr-1017 is important for interaction with PLCG1.

It is found in the cell membrane. It localises to the cell projection. Its subcellular location is the cilium. The protein localises to the golgi apparatus. It catalyses the reaction L-tyrosyl-[protein] + ATP = O-phospho-L-tyrosyl-[protein] + ADP + H(+). With respect to regulation, present in an inactive conformation in the absence of bound ligand. Binding of PDGFA and/or PDGFB leads to dimerization and activation by autophosphorylation on tyrosine residues. Inhibited by imatinib, nilotinib and sorafenib. Its function is as follows. Tyrosine-protein kinase that acts as a cell-surface receptor for PDGFA, PDGFB and PDGFC and plays an essential role in the regulation of embryonic development, cell proliferation, survival and chemotaxis. Depending on the context, promotes or inhibits cell proliferation and cell migration. Plays an important role in the differentiation of bone marrow-derived mesenchymal stem cells. Required for normal skeleton development and cephalic closure during embryonic development. Required for normal development of the mucosa lining the gastrointestinal tract, and for recruitment of mesenchymal cells and normal development of intestinal villi. Plays a role in cell migration and chemotaxis in wound healing. Plays a role in platelet activation, secretion of agonists from platelet granules, and in thrombin-induced platelet aggregation. Binding of its cognate ligands - homodimeric PDGFA, homodimeric PDGFB, heterodimers formed by PDGFA and PDGFB or homodimeric PDGFC -leads to the activation of several signaling cascades; the response depends on the nature of the bound ligand and is modulated by the formation of heterodimers between PDGFRA and PDGFRB. Phosphorylates PIK3R1, PLCG1, and PTPN11. Activation of PLCG1 leads to the production of the cellular signaling molecules diacylglycerol and inositol 1,4,5-trisphosphate, mobilization of cytosolic Ca(2+) and the activation of protein kinase C. Phosphorylates PIK3R1, the regulatory subunit of phosphatidylinositol 3-kinase, and thereby mediates activation of the AKT1 signaling pathway. Mediates activation of HRAS and of the MAP kinases MAPK1/ERK2 and/or MAPK3/ERK1. Promotes activation of STAT family members STAT1, STAT3 and STAT5A and/or STAT5B. Receptor signaling is down-regulated by protein phosphatases that dephosphorylate the receptor and its down-stream effectors, and by rapid internalization of the activated receptor. This is Platelet-derived growth factor receptor alpha (Pdgfra) from Rattus norvegicus (Rat).